Consider the following 427-residue polypeptide: Adenylosuccinate synthetase (427 aa).

GTP-binding positions include 12 to 18 (GDEGKGK) and 40 to 42 (GHT). The active-site Proton acceptor is Asp-13. Residues Asp-13 and Gly-40 each contribute to the Mg(2+) site. Residues 13-16 (DEGK), 38-41 (NAGH), Thr-128, Arg-142, Gln-223, Thr-238, and Arg-302 contribute to the IMP site. Catalysis depends on His-41, which acts as the Proton donor. 298–304 (TTTGRAR) contacts substrate. Residues Arg-304, 330 to 332 (KLD), and 412 to 414 (AVG) contribute to the GTP site.

The protein belongs to the adenylosuccinate synthetase family. As to quaternary structure, homodimer. Mg(2+) is required as a cofactor.

The protein localises to the cytoplasm. The enzyme catalyses IMP + L-aspartate + GTP = N(6)-(1,2-dicarboxyethyl)-AMP + GDP + phosphate + 2 H(+). It functions in the pathway purine metabolism; AMP biosynthesis via de novo pathway; AMP from IMP: step 1/2. Its function is as follows. Plays an important role in the de novo pathway of purine nucleotide biosynthesis. Catalyzes the first committed step in the biosynthesis of AMP from IMP. The sequence is that of Adenylosuccinate synthetase from Desulfitobacterium hafniense (strain DSM 10664 / DCB-2).